A 643-amino-acid polypeptide reads, in one-letter code: Lysophospholipase ARB_05919 (643 aa).

The N-terminal stretch at 1-22 is a signal peptide; it reads MMFIPATLGTFVLASLLPATVG. The 548-residue stretch at 50–597 folds into the PLA2c domain; it reads DCPSTKPAVR…KMYCWDGTLN (548 aa). 12 N-linked (GlcNAc...) asparagine glycosylation sites follow: Asn142, Asn176, Asn195, Asn293, Asn466, Asn472, Asn482, Asn503, Asn524, Asn533, Asn552, and Asn597.

This sequence belongs to the lysophospholipase family.

The protein resides in the secreted. The enzyme catalyses a 1-acyl-sn-glycero-3-phosphocholine + H2O = sn-glycerol 3-phosphocholine + a fatty acid + H(+). In terms of biological role, catalyzes the release of fatty acids from lysophospholipids. Phospholipase B may well contribute to pathogenicity by abetting the fungus in damaging host cell membranes. The chain is Lysophospholipase ARB_05919 from Arthroderma benhamiae (strain ATCC MYA-4681 / CBS 112371) (Trichophyton mentagrophytes).